Reading from the N-terminus, the 260-residue chain is Phosphate import ATP-binding protein PstB 1 (260 aa).

An ABC transporter domain is found at 13–255 (VRVRDLNLWY…PHTKKAEDYI (243 aa)). Residue 45–52 (GPSGCGKS) coordinates ATP.

The protein belongs to the ABC transporter superfamily. Phosphate importer (TC 3.A.1.7) family. The complex is composed of two ATP-binding proteins (PstB), two transmembrane proteins (PstC and PstA) and a solute-binding protein (PstS).

The protein resides in the cell inner membrane. The catalysed reaction is phosphate(out) + ATP + H2O = ADP + 2 phosphate(in) + H(+). Its function is as follows. Part of the ABC transporter complex PstSACB involved in phosphate import. Responsible for energy coupling to the transport system. This is Phosphate import ATP-binding protein PstB 1 from Chromohalobacter salexigens (strain ATCC BAA-138 / DSM 3043 / CIP 106854 / NCIMB 13768 / 1H11).